A 156-amino-acid chain; its full sequence is Large ribosomal subunit protein bL17 (156 aa).

Residues 127–156 (RATRAAASKKAAEEKAAEAAEEKDEAAEEK) are disordered. Residues 136-146 (KAAEEKAAEAA) are compositionally biased toward basic and acidic residues. Residues 147 to 156 (EEKDEAAEEK) are compositionally biased toward acidic residues.

The protein belongs to the bacterial ribosomal protein bL17 family. In terms of assembly, part of the 50S ribosomal subunit. Contacts protein L32.

The chain is Large ribosomal subunit protein bL17 from Corynebacterium urealyticum (strain ATCC 43042 / DSM 7109).